The chain runs to 229 residues: PKHD-type hydroxylase RPA3479 (229 aa).

The Fe2OG dioxygenase domain maps to 78 to 180 (QIFPPLFNRY…RVASFFWLQS (103 aa)). Fe cation contacts are provided by histidine 98, aspartate 100, and histidine 161. 2-oxoglutarate is bound at residue arginine 171.

The cofactor is Fe(2+). L-ascorbate serves as cofactor.

The sequence is that of PKHD-type hydroxylase RPA3479 from Rhodopseudomonas palustris (strain ATCC BAA-98 / CGA009).